The sequence spans 338 residues: MSDFDSNPFADPDLNNPFKDPSVTQVTRNVPPGLDEYNPFSDSRTPPPGNVKMPNVPSTQPAIMKPTEEHPAYTQIAKEHALAQAELLKRQEELERKAAELDRREREMQNLSQHGRKNNWPPLPGNFPVGPCFYQDFSVDIPVEFQKTVKIMYYLWMFHAVTLFLNIFGCLAWFCVDPSRGVDFGLSILWFLLFTPCSFVCWYRPLYGAFRSDSSFRFFVFFFVYICQFAVHVLQAAGFHNWGNCGWISSLTGLNQSIPVGIMMIIIAALFTASAVISLVMFKKVHGLYRTTGASFEKAQQEFATGVMSNKTVQTAAANAASTAATSAAQNAFKGNQI.

The segment at 1 to 63 (MSDFDSNPFA…PNVPSTQPAI (63 aa)) is disordered. Ser-2 carries the N-acetylserine modification. At Ser-2 the chain carries Phosphoserine. The Cytoplasmic portion of the chain corresponds to 2 to 155 (SDFDSNPFAD…QKTVKIMYYL (154 aa)). Thr-45 bears the Phosphothreonine mark. The chain crosses the membrane as a helical span at residues 156 to 176 (WMFHAVTLFLNIFGCLAWFCV). Over 177–181 (DPSRG) the chain is Lumenal. The helical transmembrane segment at 182–202 (VDFGLSILWFLLFTPCSFVCW) threads the bilayer. Residues 203-217 (YRPLYGAFRSDSSFR) lie on the Cytoplasmic side of the membrane. The helical transmembrane segment at 218–238 (FFVFFFVYICQFAVHVLQAAG) threads the bilayer. The Lumenal portion of the chain corresponds to 239 to 261 (FHNWGNCGWISSLTGLNQSIPVG). A helical membrane pass occupies residues 262 to 282 (IMMIIIAALFTASAVISLVMF). Residues 283–338 (KKVHGLYRTTGASFEKAQQEFATGVMSNKTVQTAAANAASTAATSAAQNAFKGNQI) lie on the Cytoplasmic side of the membrane.

This sequence belongs to the SCAMP family. As to quaternary structure, interacts with SYNRG, ITSN1 and SLC9A7.

It is found in the golgi apparatus. Its subcellular location is the trans-Golgi network membrane. The protein localises to the recycling endosome membrane. Its function is as follows. Functions in post-Golgi recycling pathways. Acts as a recycling carrier to the cell surface. This Sus scrofa (Pig) protein is Secretory carrier-associated membrane protein 1 (SCAMP1).